The following is a 431-amino-acid chain: Signal recognition particle 54 kDa protein (431 aa).

Residues 105–112, 185–189, and 243–246 contribute to the GTP site; these read GVEGSGKT, DTAGR, and TKMD.

It belongs to the GTP-binding SRP family. SRP54 subfamily. In terms of assembly, part of the signal recognition particle protein translocation system, which is composed of SRP and FtsY. Archaeal SRP consists of a 7S RNA molecule of 300 nucleotides and two protein subunits: SRP54 and SRP19.

It is found in the cytoplasm. The catalysed reaction is GTP + H2O = GDP + phosphate + H(+). Functionally, involved in targeting and insertion of nascent membrane proteins into the cytoplasmic membrane. Binds to the hydrophobic signal sequence of the ribosome-nascent chain (RNC) as it emerges from the ribosomes. The SRP-RNC complex is then targeted to the cytoplasmic membrane where it interacts with the SRP receptor FtsY. This chain is Signal recognition particle 54 kDa protein, found in Pyrobaculum calidifontis (strain DSM 21063 / JCM 11548 / VA1).